A 362-amino-acid chain; its full sequence is MKAFLVLDNGTIFEGESFGYETESVGEIVFNTSMAGYQEILTDPSYCNQIITLTYPMIGNYGIHPDNMESSKIQASGLIVKEYVDLPSNFKSEKTLSQFLKEYKIPAIQGIDTRKLTRFIRTNGSPNGGIFVASEYSPSFLEKVKSFPGIINADLAKVVTTSSKYIFGTHTGKKFKLAVYDYGVKTNILRLLDANGFAVTVYPAKTPSEEIMKEGTDAFFLSNGPGDPAPLDYAIASTQKIMEKRYPLFGICLGHQIIGLSLGKKTEKMKFGHRGGNQPVKNLETGQVEITSQNHGFAVIDDQKQDEPISFLNLNDHTVEGILKSGYPLLTVQYHPESAPGPNDSRYLFQKFYDLVEKTKKG.

A CPSase region spans residues 1–172; the sequence is MKAFLVLDNG…SKYIFGTHTG (172 aa). The L-glutamine site is built by Ser-45, Gly-224, and Gly-226. The Glutamine amidotransferase type-1 domain maps to 176-362; it reads KLAVYDYGVK…YDLVEKTKKG (187 aa). Cys-252 acts as the Nucleophile in catalysis. L-glutamine contacts are provided by Leu-253, Gln-256, Asn-294, Gly-296, and Phe-297. Active-site residues include His-335 and Glu-337.

The protein belongs to the CarA family. Composed of two chains; the small (or glutamine) chain promotes the hydrolysis of glutamine to ammonia, which is used by the large (or ammonia) chain to synthesize carbamoyl phosphate. Tetramer of heterodimers (alpha,beta)4.

It carries out the reaction hydrogencarbonate + L-glutamine + 2 ATP + H2O = carbamoyl phosphate + L-glutamate + 2 ADP + phosphate + 2 H(+). It catalyses the reaction L-glutamine + H2O = L-glutamate + NH4(+). Its pathway is amino-acid biosynthesis; L-arginine biosynthesis; carbamoyl phosphate from bicarbonate: step 1/1. It functions in the pathway pyrimidine metabolism; UMP biosynthesis via de novo pathway; (S)-dihydroorotate from bicarbonate: step 1/3. Its function is as follows. Small subunit of the glutamine-dependent carbamoyl phosphate synthetase (CPSase). CPSase catalyzes the formation of carbamoyl phosphate from the ammonia moiety of glutamine, carbonate, and phosphate donated by ATP, constituting the first step of 2 biosynthetic pathways, one leading to arginine and/or urea and the other to pyrimidine nucleotides. The small subunit (glutamine amidotransferase) binds and cleaves glutamine to supply the large subunit with the substrate ammonia. The protein is Carbamoyl phosphate synthase small chain of Leptospira interrogans serogroup Icterohaemorrhagiae serovar Lai (strain 56601).